A 726-amino-acid polypeptide reads, in one-letter code: Elongation factor 2 (726 aa).

In terms of domain architecture, tr-type G spans 19–260 (DRIRNIGICA…MVIKHLPSPP (242 aa)). Residues 28–35 (AHIDHGKT), 94–98 (DTPGH), and 148–151 (NKVD) each bind GTP. H602 carries the diphthamide modification.

This sequence belongs to the TRAFAC class translation factor GTPase superfamily. Classic translation factor GTPase family. EF-G/EF-2 subfamily.

It is found in the cytoplasm. In terms of biological role, catalyzes the GTP-dependent ribosomal translocation step during translation elongation. During this step, the ribosome changes from the pre-translocational (PRE) to the post-translocational (POST) state as the newly formed A-site-bound peptidyl-tRNA and P-site-bound deacylated tRNA move to the P and E sites, respectively. Catalyzes the coordinated movement of the two tRNA molecules, the mRNA and conformational changes in the ribosome. The polypeptide is Elongation factor 2 (fusA) (Methanocaldococcus jannaschii (strain ATCC 43067 / DSM 2661 / JAL-1 / JCM 10045 / NBRC 100440) (Methanococcus jannaschii)).